The sequence spans 503 residues: Probable cytosol aminopeptidase (503 aa).

Mn(2+) contacts are provided by lysine 270 and aspartate 275. Residue lysine 282 is part of the active site. The Mn(2+) site is built by aspartate 293, aspartate 352, and glutamate 354. Residue arginine 356 is part of the active site.

This sequence belongs to the peptidase M17 family. Mn(2+) is required as a cofactor.

The protein resides in the cytoplasm. The catalysed reaction is Release of an N-terminal amino acid, Xaa-|-Yaa-, in which Xaa is preferably Leu, but may be other amino acids including Pro although not Arg or Lys, and Yaa may be Pro. Amino acid amides and methyl esters are also readily hydrolyzed, but rates on arylamides are exceedingly low.. It carries out the reaction Release of an N-terminal amino acid, preferentially leucine, but not glutamic or aspartic acids.. Functionally, presumably involved in the processing and regular turnover of intracellular proteins. Catalyzes the removal of unsubstituted N-terminal amino acids from various peptides. The protein is Probable cytosol aminopeptidase of Serratia proteamaculans (strain 568).